The primary structure comprises 28 residues: Chassatide C11 (28 aa).

Cystine bridges form between Cys-3–Cys-19, Cys-7–Cys-21, and Cys-12–Cys-26. Met-16 is subject to Methionine sulfoxide; in form chassatide chaC11A.

Belongs to the cyclotide family. Bracelet subfamily. In terms of tissue distribution, expressed in fruit, pedicel and stem but not in leaf and root (at protein level).

Functionally, chassatide C11: Probably participates in a plant defense mechanism. Active against E.coli ATCC 25922 (MIC=8.5 uM) but not against S.aureus ATCC 12600 or S.epidermidis ATCC 14990. Has cytotoxic and hemolytic activity. Its function is as follows. Chassatide C11A: Probably participates in a plant defense mechanism. Has no activity against bacteria up to a concentration of 80 uM. Has no cytotoxic and no hemolytic activity. This chain is Chassatide C11, found in Chassalia chartacea (Chassalia curviflora).